A 416-amino-acid chain; its full sequence is Cell division protein FtsZ (416 aa).

GTP-binding positions include 20 to 24 (GGGVN), 107 to 109 (GTG), Glu-138, Arg-142, and Asp-186. Positions 319–335 (QETNANNSSPAQRQAES) are enriched in polar residues. A disordered region spans residues 319 to 416 (QETNANNSSP…DSLDFPDFLK (98 aa)). The segment covering 376-392 (QDDDIPDDAGFDVDLPA) has biased composition (acidic residues). The segment covering 404–416 (ARKDSLDFPDFLK) has biased composition (basic and acidic residues).

Belongs to the FtsZ family. Homodimer. Polymerizes to form a dynamic ring structure in a strictly GTP-dependent manner. Interacts directly with several other division proteins.

The protein localises to the cytoplasm. Essential cell division protein that forms a contractile ring structure (Z ring) at the future cell division site. The regulation of the ring assembly controls the timing and the location of cell division. One of the functions of the FtsZ ring is to recruit other cell division proteins to the septum to produce a new cell wall between the dividing cells. Binds GTP and shows GTPase activity. This chain is Cell division protein FtsZ, found in Kocuria rhizophila (strain ATCC 9341 / DSM 348 / NBRC 103217 / DC2201).